A 568-amino-acid chain; its full sequence is Proline--tRNA ligase (568 aa).

Belongs to the class-II aminoacyl-tRNA synthetase family. ProS type 1 subfamily. As to quaternary structure, homodimer.

The protein localises to the cytoplasm. It carries out the reaction tRNA(Pro) + L-proline + ATP = L-prolyl-tRNA(Pro) + AMP + diphosphate. Its function is as follows. Catalyzes the attachment of proline to tRNA(Pro) in a two-step reaction: proline is first activated by ATP to form Pro-AMP and then transferred to the acceptor end of tRNA(Pro). As ProRS can inadvertently accommodate and process non-cognate amino acids such as alanine and cysteine, to avoid such errors it has two additional distinct editing activities against alanine. One activity is designated as 'pretransfer' editing and involves the tRNA(Pro)-independent hydrolysis of activated Ala-AMP. The other activity is designated 'posttransfer' editing and involves deacylation of mischarged Ala-tRNA(Pro). The misacylated Cys-tRNA(Pro) is not edited by ProRS. The sequence is that of Proline--tRNA ligase from Listeria monocytogenes serotype 4a (strain HCC23).